A 191-amino-acid polypeptide reads, in one-letter code: Probable DNA-directed RNA polymerase subunit delta (191 aa).

One can recognise an HTH HARE-type domain in the interval 14 to 83 (LSMIEVARAI…GDNKWGLRSW (70 aa)). 2 stretches are compositionally biased toward acidic residues: residues 119–133 (EDAI…EDEN) and 143–191 (YDND…ETND). The tract at residues 119 to 191 (EDAIDYNDDD…DDDYEDETND (73 aa)) is disordered.

It belongs to the RpoE family. As to quaternary structure, RNAP is composed of a core of 2 alpha, a beta and a beta' subunits. The core is associated with a delta subunit and one of several sigma factors.

Participates in both the initiation and recycling phases of transcription. In the presence of the delta subunit, RNAP displays an increased specificity of transcription, a decreased affinity for nucleic acids, and an increased efficiency of RNA synthesis because of enhanced recycling. The polypeptide is Probable DNA-directed RNA polymerase subunit delta (Streptococcus thermophilus (strain ATCC BAA-491 / LMD-9)).